Reading from the N-terminus, the 503-residue chain is Arabinose import ATP-binding protein AraG 1 (503 aa).

ABC transporter domains follow at residues 5 to 240 and 253 to 497; these read LRFD…MVGR and LGDV…LPQG. Position 37-44 (37-44) interacts with ATP; the sequence is GENGAGKS.

It belongs to the ABC transporter superfamily. Arabinose importer (TC 3.A.1.2.2) family. The complex is composed of two ATP-binding proteins (AraG), two transmembrane proteins (AraH) and a solute-binding protein (AraF).

It is found in the cell inner membrane. It catalyses the reaction L-arabinose(out) + ATP + H2O = L-arabinose(in) + ADP + phosphate + H(+). Functionally, part of the ABC transporter complex AraFGH involved in arabinose import. Responsible for energy coupling to the transport system. The protein is Arabinose import ATP-binding protein AraG 1 of Burkholderia thailandensis (strain ATCC 700388 / DSM 13276 / CCUG 48851 / CIP 106301 / E264).